Reading from the N-terminus, the 203-residue chain is Small ribosomal subunit protein uS4c (203 aa).

Residues 91-154 enclose the S4 RNA-binding domain; it reads MRLDNIIFRL…KYESIISKNI (64 aa).

Belongs to the universal ribosomal protein uS4 family. Part of the 30S ribosomal subunit. Contacts protein S5. The interaction surface between S4 and S5 is involved in control of translational fidelity.

It localises to the plastid. Its subcellular location is the chloroplast. Functionally, one of the primary rRNA binding proteins, it binds directly to 16S rRNA where it nucleates assembly of the body of the 30S subunit. With S5 and S12 plays an important role in translational accuracy. The sequence is that of Small ribosomal subunit protein uS4c (rps4) from Lopidium struthiopteris (Moss).